The primary structure comprises 317 residues: Serpentine receptor class delta-26 (317 aa).

The next 7 helical transmembrane spans lie at 5–25 (LLHT…MYLA), 38–58 (AIIT…FFVM), 83–103 (ACYV…IWMI), 122–142 (SLVF…AAWI), 176–196 (ITLI…YAWI), 227–247 (FQVF…AMFG), and 258–278 (LVSI…ILFV).

This sequence belongs to the nematode receptor-like protein srd family.

It localises to the membrane. This is Serpentine receptor class delta-26 (srd-26) from Caenorhabditis elegans.